Consider the following 189-residue polypeptide: Ribonuclease M5 (189 aa).

The 84-residue stretch at 8–91 (KEIIVVEGKD…AFLPKEEALA (84 aa)) folds into the Toprim domain. Glu14, Asp60, and Asp62 together coordinate Mg(2+).

Belongs to the ribonuclease M5 family. Requires Mg(2+) as cofactor.

Its subcellular location is the cytoplasm. The catalysed reaction is Endonucleolytic cleavage of RNA, removing 21 and 42 nucleotides, respectively, from the 5'- and 3'-termini of a 5S-rRNA precursor.. Required for correct processing of both the 5' and 3' ends of 5S rRNA precursor. Cleaves both sides of a double-stranded region yielding mature 5S rRNA in one step. This is Ribonuclease M5 from Bacillus cereus (strain ATCC 14579 / DSM 31 / CCUG 7414 / JCM 2152 / NBRC 15305 / NCIMB 9373 / NCTC 2599 / NRRL B-3711).